The chain runs to 49 residues: Large ribosomal subunit protein bL33A (49 aa).

Belongs to the bacterial ribosomal protein bL33 family.

The chain is Large ribosomal subunit protein bL33A from Latilactobacillus sakei subsp. sakei (strain 23K) (Lactobacillus sakei subsp. sakei).